The chain runs to 273 residues: Undecaprenyl-diphosphatase (273 aa).

Helical transmembrane passes span 4–24 (LILI…FLPI), 43–63 (KAQV…CWEY), 82–102 (FVLN…LFIK), 108–128 (LFHP…ILWA), 183–203 (AAEF…FYDV), 217–237 (MFVV…RGFI), and 253–273 (IGFG…WSAG).

It belongs to the UppP family.

It is found in the cell inner membrane. The catalysed reaction is di-trans,octa-cis-undecaprenyl diphosphate + H2O = di-trans,octa-cis-undecaprenyl phosphate + phosphate + H(+). Functionally, catalyzes the dephosphorylation of undecaprenyl diphosphate (UPP). Confers resistance to bacitracin. The sequence is that of Undecaprenyl-diphosphatase from Nitrosomonas eutropha (strain DSM 101675 / C91 / Nm57).